The sequence spans 1264 residues: ATP-dependent helicase/nuclease subunit A (1264 aa).

The UvrD-like helicase ATP-binding domain occupies 12–482 (EQFTDSQWQA…IILAENFRSR (471 aa)). 33-40 (ASAGSGKT) serves as a coordination point for ATP. Positions 520–808 (SEAADYSTEL…RVMTIHASKG (289 aa)) constitute a UvrD-like helicase C-terminal domain.

Belongs to the helicase family. AddA subfamily. In terms of assembly, heterodimer of AddA and AddB/RexB. Mg(2+) serves as cofactor.

The enzyme catalyses Couples ATP hydrolysis with the unwinding of duplex DNA by translocating in the 3'-5' direction.. It catalyses the reaction ATP + H2O = ADP + phosphate + H(+). In terms of biological role, the heterodimer acts as both an ATP-dependent DNA helicase and an ATP-dependent, dual-direction single-stranded exonuclease. Recognizes the chi site generating a DNA molecule suitable for the initiation of homologous recombination. The AddA nuclease domain is required for chi fragment generation; this subunit has the helicase and 3' -&gt; 5' nuclease activities. The chain is ATP-dependent helicase/nuclease subunit A from Enterococcus faecalis (strain ATCC 700802 / V583).